Reading from the N-terminus, the 396-residue chain is Cell division protein DivIB (396 aa).

Disordered regions lie at residues 1–23 and 37–116; these read MSKDKKNEDKETLEELKELSEWQ and EVAL…ATKE. Over 1–130 the chain is Cytoplasmic; it reads MSKDKKNEDK…AKIPGIHILR (130 aa). 2 stretches are compositionally biased toward basic and acidic residues: residues 37–65 and 75–116; these read EVALAEEKEKERQARMGEESEKSEDKQDQ and ESAK…ATKE. The helical transmembrane segment at 131–151 threads the bilayer; it reads AFTILFPSLLLLIVSAYLLSP. Topologically, residues 152 to 396 are extracellular; the sequence is YATMKDIRVE…NQTNQRSSRR (245 aa). The region spanning 153-223 is the POTRA domain; that stretch reads ATMKDIRVEG…TKFTIKVKEY (71 aa). Residues 361 to 385 are compositionally biased toward basic and acidic residues; it reads KAKQEAKEAEKKQEEEQKKQEEESN. Residues 361 to 396 are disordered; sequence KAKQEAKEAEKKQEEEQKKQEEESNRNQTNQRSSRR. Low complexity predominate over residues 386 to 396; it reads RNQTNQRSSRR.

It belongs to the FtsQ/DivIB family. DivIB subfamily.

Its subcellular location is the cell membrane. In terms of biological role, cell division protein that may be involved in stabilizing or promoting the assembly of the division complex. In Streptococcus pneumoniae (strain ATCC BAA-255 / R6), this protein is Cell division protein DivIB.